Here is a 231-residue protein sequence, read N- to C-terminus: DNA mismatch repair protein MutH (231 aa).

It belongs to the MutH family.

Its subcellular location is the cytoplasm. In terms of biological role, sequence-specific endonuclease that cleaves unmethylated GATC sequences. It is involved in DNA mismatch repair. In Salmonella typhi, this protein is DNA mismatch repair protein MutH.